Consider the following 235-residue polypeptide: Large ribosomal subunit protein uL1 (235 aa).

Belongs to the universal ribosomal protein uL1 family. As to quaternary structure, part of the 50S ribosomal subunit.

Its function is as follows. Binds directly to 23S rRNA. The L1 stalk is quite mobile in the ribosome, and is involved in E site tRNA release. Functionally, protein L1 is also a translational repressor protein, it controls the translation of the L11 operon by binding to its mRNA. The chain is Large ribosomal subunit protein uL1 from Citrobacter koseri (strain ATCC BAA-895 / CDC 4225-83 / SGSC4696).